A 478-amino-acid polypeptide reads, in one-letter code: tRNA(Ile)-lysidine synthase (478 aa).

27-32 (SGGSDS) contacts ATP.

This sequence belongs to the tRNA(Ile)-lysidine synthase family.

It is found in the cytoplasm. It catalyses the reaction cytidine(34) in tRNA(Ile2) + L-lysine + ATP = lysidine(34) in tRNA(Ile2) + AMP + diphosphate + H(+). Functionally, ligates lysine onto the cytidine present at position 34 of the AUA codon-specific tRNA(Ile) that contains the anticodon CAU, in an ATP-dependent manner. Cytidine is converted to lysidine, thus changing the amino acid specificity of the tRNA from methionine to isoleucine. This chain is tRNA(Ile)-lysidine synthase, found in Rickettsia rickettsii (strain Iowa).